A 755-amino-acid chain; its full sequence is Periplasmic nitrate reductase (755 aa).

A signal peptide (tat-type signal) is located at residues 1 to 32 (MSTSRRDFLKYFAMSAAVAAASGAGFGSLALA). Residues 38 to 93 (EKWVKGVCRYCGTGCGVLVGVKDGKAVAIQGDPNNHNAGLLCLKGSLLIPVLNSKE) form the 4Fe-4S Mo/W bis-MGD-type domain. Cysteine 45, cysteine 48, cysteine 52, and cysteine 79 together coordinate [4Fe-4S] cluster. Mo-bis(molybdopterin guanine dinucleotide)-binding positions include lysine 81, glutamine 143, asparagine 168, cysteine 172, 208–212 (NTSEA), 236–238 (DPR), 255–257 (GTD), methionine 340, glutamine 344, asparagine 450, 475–477 (IEA), and 647–656 (SMRVIDHWHT). Residues 648 to 653 (MRVIDH) and phenylalanine 721 each bind substrate. Mo-bis(molybdopterin guanine dinucleotide) is bound by residues asparagine 729 and lysine 746.

Belongs to the prokaryotic molybdopterin-containing oxidoreductase family. NasA/NapA/NarB subfamily. In terms of assembly, monomer. Component of the periplasmic nitrate reductase NapAB complex composed of NapA and NapB. [4Fe-4S] cluster is required as a cofactor. Mo-bis(molybdopterin guanine dinucleotide) serves as cofactor. Post-translationally, predicted to be exported by the Tat system. The position of the signal peptide cleavage has been experimentally proven.

The protein resides in the periplasm. The catalysed reaction is 2 Fe(II)-[cytochrome] + nitrate + 2 H(+) = 2 Fe(III)-[cytochrome] + nitrite + H2O. Activated by potassium and sodium ions and inhibited by magnesium and calcium ions. Catalytic subunit of the periplasmic nitrate reductase complex NapAB. Receives electrons from NapB and catalyzes the reduction of nitrate to nitrite. The polypeptide is Periplasmic nitrate reductase (Desulfovibrio desulfuricans (strain ATCC 27774 / DSM 6949 / MB)).